The following is a 262-amino-acid chain: Acyl-[acyl-carrier-protein]--UDP-N-acetylglucosamine O-acyltransferase (262 aa).

The protein belongs to the transferase hexapeptide repeat family. LpxA subfamily. Homotrimer.

The protein resides in the cytoplasm. The enzyme catalyses a (3R)-hydroxyacyl-[ACP] + UDP-N-acetyl-alpha-D-glucosamine = a UDP-3-O-[(3R)-3-hydroxyacyl]-N-acetyl-alpha-D-glucosamine + holo-[ACP]. It functions in the pathway glycolipid biosynthesis; lipid IV(A) biosynthesis; lipid IV(A) from (3R)-3-hydroxytetradecanoyl-[acyl-carrier-protein] and UDP-N-acetyl-alpha-D-glucosamine: step 1/6. Its function is as follows. Involved in the biosynthesis of lipid A, a phosphorylated glycolipid that anchors the lipopolysaccharide to the outer membrane of the cell. In Vibrio parahaemolyticus serotype O3:K6 (strain RIMD 2210633), this protein is Acyl-[acyl-carrier-protein]--UDP-N-acetylglucosamine O-acyltransferase.